Here is a 505-residue protein sequence, read N- to C-terminus: Probable cytosol aminopeptidase (505 aa).

Mn(2+)-binding residues include K269 and D274. The active site involves K281. 3 residues coordinate Mn(2+): D292, D351, and E353. R355 is an active-site residue.

Belongs to the peptidase M17 family. It depends on Mn(2+) as a cofactor.

The protein localises to the cytoplasm. It catalyses the reaction Release of an N-terminal amino acid, Xaa-|-Yaa-, in which Xaa is preferably Leu, but may be other amino acids including Pro although not Arg or Lys, and Yaa may be Pro. Amino acid amides and methyl esters are also readily hydrolyzed, but rates on arylamides are exceedingly low.. The enzyme catalyses Release of an N-terminal amino acid, preferentially leucine, but not glutamic or aspartic acids.. Its function is as follows. Presumably involved in the processing and regular turnover of intracellular proteins. Catalyzes the removal of unsubstituted N-terminal amino acids from various peptides. The sequence is that of Probable cytosol aminopeptidase from Rhodococcus jostii (strain RHA1).